The following is a 1088-amino-acid chain: MIDSSKKQQQGFPEILTAGDFEPLKEKECLEGSNQKSLKEVLQLRLQQRRTREQLVDQGIMPPLKSPAAFHEQIKSLERARTENFLKHKIRSRPDRSELVRMHILEETFAEPSLQATQMKLKRARLADDLNEKIAQRPGPMELVEKNILPVDSSVKEAIIGVGKEDYPHTQGDFSFDEDSSDALSPDQPASQESQGSAASPSEPKVSESPSPVTTNTPAQFASVSPTVPEFLKTPPTADQPPPRPAAPVLPTNTVSSAKPGPALVKQSHPKNPNDKHRSKKCKDPKPRVKKLKYHQYIPPDQKGEKNEPQMDSNYARLLQQQQLFLQLQILSQQKQHYNYQTILPAPFKPLNDKNSNSGNSALNNATPNTPRQNTSTPVRKPGPLPSSLDDLKVSELKTELKLRGLPVSGTKPDLIERLKPYQEVNSSGLAAGGIVAVSSSAIVTSNPEVTVALPVTTLHNTVTSSVSTLKAELPPTGTSNATRVENVHSPLPISPSPSEQSSLSTDDTNMADTFTEIMTMMSPSQFLSSSPLRMTNNEDSLSPTSSTLSNLELDAAEKDRKLQEKEKQIEELKRKLEQEQKLVEVLKMQLEVEKRGQQQRPLEAQPSAPGHSVKSDQKHGSLGSSIKDEASLPDCSSSRQPIPVASHAVGQPVSTGGQTLVAKKAVVIKQEVPVGQAEQQSVVSQFYVSSQGQPPPAVVAQPQALLTTQTAQLLLPVSIQGSSVTSVQLPVGSLKLQTSPQAGMQTQPQIATAAQIPTAALASGLAPTVPQTQDTFPQHVLSQPQQVRKVFTNSASSNTVLPYQRHPAPAVQQPFINKASNSVLQSRNAPLPSLQNGPNTPNKPSSPPPPQQFVVQHSLFGSPVAKTKDPPRYEEAIKQTRSTQAPLPEISNAHSQQMDDLFDILIKSGEISLPIKEEPSPISKMRPVTASITTMPVNTVVSRPPPQVQMAPPVSLEPMGSLSASLENQLEAFLDGTLPSANEIPPLQSSSEDREPFSLIEDLQNDLLSHSGMLDHSHSPMETSETQFAAGTPCLSLDLSDSNLDNMEWLDITMPNSSSGLTPLSTTAPSMFSADFLDPQDLPLPWD.

At Glu22 the chain carries Phosphoserine. An RPEL 1 repeat occupies 40–65; it reads EVLQLRLQQRRTREQLVDQGIMPPLK. Ser66 is subject to Phosphoserine. RPEL repeat units lie at residues 84 to 109 and 128 to 153; these read NFLK…EETF and DDLN…PVDS. 4 disordered regions span residues 165 to 310, 349 to 389, 472 to 508, and 528 to 553; these read EDYP…NEPQ, KPLN…PSSL, AELP…STDD, and LSSS…SNLE. Positions 197 to 213 are enriched in low complexity; that stretch reads SAASPSEPKVSESPSPV. Positions 214 to 226 are enriched in polar residues; sequence TTNTPAQFASVSP. Residues 238–248 are compositionally biased toward pro residues; the sequence is ADQPPPRPAAP. Over residues 272–287 the composition is skewed to basic and acidic residues; the sequence is NPNDKHRSKKCKDPKP. A compositionally biased stretch (low complexity) spans 355–366; sequence NSNSGNSALNNA. 2 positions are modified to phosphothreonine: Thr367 and Thr370. Residues 367–378 show a composition bias toward polar residues; the sequence is TPNTPRQNTSTP. Positions 389–423 constitute an SAP domain; that stretch reads LDDLKVSELKTELKLRGLPVSGTKPDLIERLKPYQ. Polar residues predominate over residues 528-540; that stretch reads LSSSPLRMTNNED. Residues Ser541 and Ser543 each carry the phosphoserine modification. Low complexity predominate over residues 541–550; it reads SLSPTSSTLS. Residues 545–601 adopt a coiled-coil conformation; that stretch reads TSSTLSNLELDAAEKDRKLQEKEKQIEELKRKLEQEQKLVEVLKMQLEVEKRGQQQR. Residues 563 to 591 are required for interaction with itself and with MRTFA; the sequence is LQEKEKQIEELKRKLEQEQKLVEVLKMQL. Disordered regions lie at residues 595 to 655 and 829 to 886; these read KRGQ…QPVS and NAPL…STQA. Lys628 participates in a covalent cross-link: Glycyl lysine isopeptide (Lys-Gly) (interchain with G-Cter in SUMO1). Positions 829-838 are enriched in polar residues; that stretch reads NAPLPSLQNG. A compositionally biased stretch (basic and acidic residues) spans 867 to 879; that stretch reads KTKDPPRYEEAIK. Ser921 carries the post-translational modification Phosphoserine.

In terms of assembly, interacts with MRTFA and SRF. Post-translationally, O-glycosylated.

It is found in the nucleus. Its function is as follows. Acts as a transcriptional coactivator of serum response factor (SRF). Required for skeletal myogenic differentiation. This chain is Myocardin-related transcription factor B, found in Homo sapiens (Human).